A 413-amino-acid polypeptide reads, in one-letter code: Multifunctional CCA protein (413 aa).

Residues G8 and R11 each coordinate ATP. CTP is bound by residues G8 and R11. Positions 21 and 23 each coordinate Mg(2+). ATP contacts are provided by R91, R137, and R140. R91, R137, and R140 together coordinate CTP. The HD domain maps to 228–329 (TGVHTLMTLS…VKLFDAIDAW (102 aa)).

The protein belongs to the tRNA nucleotidyltransferase/poly(A) polymerase family. Bacterial CCA-adding enzyme type 1 subfamily. In terms of assembly, monomer. Can also form homodimers and oligomers. It depends on Mg(2+) as a cofactor. The cofactor is Ni(2+).

The enzyme catalyses a tRNA precursor + 2 CTP + ATP = a tRNA with a 3' CCA end + 3 diphosphate. The catalysed reaction is a tRNA with a 3' CCA end + 2 CTP + ATP = a tRNA with a 3' CCACCA end + 3 diphosphate. Functionally, catalyzes the addition and repair of the essential 3'-terminal CCA sequence in tRNAs without using a nucleic acid template. Adds these three nucleotides in the order of C, C, and A to the tRNA nucleotide-73, using CTP and ATP as substrates and producing inorganic pyrophosphate. tRNA 3'-terminal CCA addition is required both for tRNA processing and repair. Also involved in tRNA surveillance by mediating tandem CCA addition to generate a CCACCA at the 3' terminus of unstable tRNAs. While stable tRNAs receive only 3'-terminal CCA, unstable tRNAs are marked with CCACCA and rapidly degraded. This chain is Multifunctional CCA protein, found in Salmonella schwarzengrund (strain CVM19633).